Here is a 217-residue protein sequence, read N- to C-terminus: Phosphoenolpyruvate guanylyltransferase (217 aa).

The phosphoenolpyruvate site is built by T150, G165, and S168.

Belongs to the CofC family.

It catalyses the reaction phosphoenolpyruvate + GTP + H(+) = enolpyruvoyl-2-diphospho-5'-guanosine + diphosphate. It participates in cofactor biosynthesis; coenzyme F420 biosynthesis. In terms of biological role, guanylyltransferase that catalyzes the activation of phosphoenolpyruvate (PEP) as enolpyruvoyl-2-diphospho-5'-guanosine, via the condensation of PEP with GTP. It is involved in the biosynthesis of coenzyme F420, a hydride carrier cofactor. This Mycobacterium ulcerans (strain Agy99) protein is Phosphoenolpyruvate guanylyltransferase.